The sequence spans 376 residues: MYSVISEKISETITLQRQTSSRYIEFFVFRNVDINELWTTDISEDKTHDVWPAINEKSFKKFLENELTSYQRPISLLGIPQNGTVSKTCKREKQRETDCVNYVRKHGNPVTFYPRHRAKRNANTDTCISEEPSILVSHHRNSKMDVFMDANKITLVNRELIWVPHDQVRIVKLDISLCIPDGFFGVIIGHSNDVFCECITEIITDETDISVFLMNLSEHSLMLLPGDVEFSINFLPCYIPEPWEMINLSPPESAVFHLKTCREFIIKPNSYTIQCFDAMYVCADELKALMIPSKEIIKLGLLIETYIWNKDTIPSIKIFNSTRKTIYIPTGICIARIIFTCGHFCLSLMPERAINRLQVLDASSFFLFHYAAFSNA.

This sequence belongs to the dUTPase family. It depends on Mg(2+) as a cofactor.

It carries out the reaction dUTP + H2O = dUMP + diphosphate + H(+). Involved in nucleotide metabolism: produces dUMP, the immediate precursor of thymidine nucleotides and decreases the intracellular concentration of dUTP to avoid uracil incorporation into viral DNA. The protein is Deoxyuridine 5'-triphosphate nucleotidohydrolase of Human herpesvirus 6B (strain Z29) (HHV-6 variant B).